Consider the following 606-residue polypeptide: tRNA 5-methylaminomethyl-2-thiouridine biosynthesis bifunctional protein MnmC (606 aa).

The interval 1 to 237 (MNSNSSVQFN…KRDMLCGHYL (237 aa)) is tRNA (mnm(5)s(2)U34)-methyltransferase. Positions 254–606 (IGGGISAACS…RRISVSRFKG (353 aa)) are FAD-dependent cmnm(5)s(2)U34 oxidoreductase.

In the N-terminal section; belongs to the methyltransferase superfamily. tRNA (mnm(5)s(2)U34)-methyltransferase family. It in the C-terminal section; belongs to the DAO family. Requires FAD as cofactor.

The protein localises to the cytoplasm. The catalysed reaction is 5-aminomethyl-2-thiouridine(34) in tRNA + S-adenosyl-L-methionine = 5-methylaminomethyl-2-thiouridine(34) in tRNA + S-adenosyl-L-homocysteine + H(+). Functionally, catalyzes the last two steps in the biosynthesis of 5-methylaminomethyl-2-thiouridine (mnm(5)s(2)U) at the wobble position (U34) in tRNA. Catalyzes the FAD-dependent demodification of cmnm(5)s(2)U34 to nm(5)s(2)U34, followed by the transfer of a methyl group from S-adenosyl-L-methionine to nm(5)s(2)U34, to form mnm(5)s(2)U34. In Idiomarina loihiensis (strain ATCC BAA-735 / DSM 15497 / L2-TR), this protein is tRNA 5-methylaminomethyl-2-thiouridine biosynthesis bifunctional protein MnmC.